A 344-amino-acid polypeptide reads, in one-letter code: Dihydroorotase (344 aa).

Zn(2+) contacts are provided by His-13 and His-15. Substrate-binding positions include 15–17 and Asn-41; that span reads HFR. Positions 98, 135, and 173 each coordinate Zn(2+). N6-carboxylysine is present on Lys-98. A substrate-binding site is contributed by His-135. Residue Leu-218 participates in substrate binding. Asp-246 contacts Zn(2+). Residue Asp-246 is part of the active site. His-250 and Ala-262 together coordinate substrate.

This sequence belongs to the metallo-dependent hydrolases superfamily. DHOase family. Class II DHOase subfamily. In terms of assembly, homodimer. The cofactor is Zn(2+).

It catalyses the reaction (S)-dihydroorotate + H2O = N-carbamoyl-L-aspartate + H(+). Its pathway is pyrimidine metabolism; UMP biosynthesis via de novo pathway; (S)-dihydroorotate from bicarbonate: step 3/3. Functionally, catalyzes the reversible cyclization of carbamoyl aspartate to dihydroorotate. This Pseudoalteromonas atlantica (strain T6c / ATCC BAA-1087) protein is Dihydroorotase.